We begin with the raw amino-acid sequence, 379 residues long: Queuine tRNA-ribosyltransferase (379 aa).

Asp-91 acts as the Proton acceptor in catalysis. Substrate is bound by residues 91–95 (DSGGF), Asp-145, Gln-189, and Gly-216. The tract at residues 247 to 253 (GVGKPED) is RNA binding. Asp-266 (nucleophile) is an active-site residue. Residues 271 to 275 (TRNAR) are RNA binding; important for wobble base 34 recognition. Zn(2+)-binding residues include Cys-304, Cys-306, Cys-309, and His-335.

The protein belongs to the queuine tRNA-ribosyltransferase family. As to quaternary structure, homodimer. Within each dimer, one monomer is responsible for RNA recognition and catalysis, while the other monomer binds to the replacement base PreQ1. Zn(2+) is required as a cofactor.

It carries out the reaction 7-aminomethyl-7-carbaguanine + guanosine(34) in tRNA = 7-aminomethyl-7-carbaguanosine(34) in tRNA + guanine. Its pathway is tRNA modification; tRNA-queuosine biosynthesis. Its function is as follows. Catalyzes the base-exchange of a guanine (G) residue with the queuine precursor 7-aminomethyl-7-deazaguanine (PreQ1) at position 34 (anticodon wobble position) in tRNAs with GU(N) anticodons (tRNA-Asp, -Asn, -His and -Tyr). Catalysis occurs through a double-displacement mechanism. The nucleophile active site attacks the C1' of nucleotide 34 to detach the guanine base from the RNA, forming a covalent enzyme-RNA intermediate. The proton acceptor active site deprotonates the incoming PreQ1, allowing a nucleophilic attack on the C1' of the ribose to form the product. After dissociation, two additional enzymatic reactions on the tRNA convert PreQ1 to queuine (Q), resulting in the hypermodified nucleoside queuosine (7-(((4,5-cis-dihydroxy-2-cyclopenten-1-yl)amino)methyl)-7-deazaguanosine). The chain is Queuine tRNA-ribosyltransferase from Vibrio cholerae serotype O1 (strain ATCC 39315 / El Tor Inaba N16961).